We begin with the raw amino-acid sequence, 123 residues long: MKDQGRSTRKRTGGRLKHASNKKRHQLGREPAETTVGETRVQYIDSRGNEKKVRALSTNVAQVADGDAVSEAEIENVVDNPSNVNYARRNIITKGAIIETSAGRARVSSRPGQTGQVNAVLID.

The disordered stretch occupies residues 1-37 (MKDQGRSTRKRTGGRLKHASNKKRHQLGREPAETTVG). The span at 7–26 (STRKRTGGRLKHASNKKRHQ) shows a compositional bias: basic residues.

It belongs to the eukaryotic ribosomal protein eS8 family. Part of the 30S ribosomal subunit.

This Halorubrum lacusprofundi (strain ATCC 49239 / DSM 5036 / JCM 8891 / ACAM 34) protein is Small ribosomal subunit protein eS8.